The primary structure comprises 440 residues: Glycerol-3-phosphate dehydrogenase [NAD(+)], chloroplastic (440 aa).

A chloroplast-targeting transit peptide spans 1–47 (MAAAAAATFLPHTPTPRRRLAVAVHSPTRRRLSLVFSGPPDGALSVA). Residues 57–76 (EEAAAAVSAPRGGGGGGGKE) are disordered. Residues 114–119 (GGGSFG), phenylalanine 191, lysine 214, and alanine 248 each bind NAD(+). Residue lysine 214 participates in substrate binding. The active-site Proton acceptor is lysine 299. NAD(+)-binding residues include arginine 363 and glutamate 389. Substrate is bound at residue 363–364 (RN).

It belongs to the NAD-dependent glycerol-3-phosphate dehydrogenase family.

The protein resides in the plastid. The protein localises to the chloroplast. It catalyses the reaction sn-glycerol 3-phosphate + NAD(+) = dihydroxyacetone phosphate + NADH + H(+). Its pathway is membrane lipid metabolism; glycerophospholipid metabolism. Required to supply glycerol-3-phosphate in the chloroplast for the synthesis of glycerolipids. The chain is Glycerol-3-phosphate dehydrogenase [NAD(+)], chloroplastic from Oryza sativa subsp. japonica (Rice).